Consider the following 326-residue polypeptide: tRNA-dihydrouridine(20/20a) synthase (326 aa).

Residues 11-13 (PML) and Q63 contribute to the FMN site. Catalysis depends on C93, which acts as the Proton donor. Residues K132, H165, 205-207 (NGG), and 227-228 (GR) each bind FMN.

It belongs to the Dus family. DusA subfamily. It depends on FMN as a cofactor.

The catalysed reaction is 5,6-dihydrouridine(20) in tRNA + NADP(+) = uridine(20) in tRNA + NADPH + H(+). The enzyme catalyses 5,6-dihydrouridine(20) in tRNA + NAD(+) = uridine(20) in tRNA + NADH + H(+). It catalyses the reaction 5,6-dihydrouridine(20a) in tRNA + NADP(+) = uridine(20a) in tRNA + NADPH + H(+). It carries out the reaction 5,6-dihydrouridine(20a) in tRNA + NAD(+) = uridine(20a) in tRNA + NADH + H(+). Its function is as follows. Catalyzes the synthesis of 5,6-dihydrouridine (D), a modified base found in the D-loop of most tRNAs, via the reduction of the C5-C6 double bond in target uridines. Specifically modifies U20 and U20a in tRNAs. The sequence is that of tRNA-dihydrouridine(20/20a) synthase from Vibrio vulnificus (strain CMCP6).